Here is a 1295-residue protein sequence, read N- to C-terminus: Serine protease pet autotransporter (1295 aa).

The N-terminal stretch at Met-1 to Ala-52 is a signal peptide. Residues Asn-54–Glu-304 form the Peptidase S6 domain. Active-site charge relay system residues include His-124, Asp-153, and Ser-260. One can recognise an Autotransporter domain in the interval Asp-1029 to Phe-1295.

Post-translationally, cleaved to release the mature protein from the outer membrane.

The protein resides in the periplasm. The protein localises to the secreted. It localises to the cell surface. It is found in the cell outer membrane. With respect to regulation, inhibition of cytotoxic activity by phenylmethylsulfonyl fluoride. Serine protease with enterotoxic and cytotoxic activity. Internalization into the host cell is required for the induction of cytopathic effects. However, the serine activity is not necessary for secretion and internalization into the host cell. The chain is Serine protease pet autotransporter (pet) from Escherichia coli O44:H18 (strain 042 / EAEC).